We begin with the raw amino-acid sequence, 137 residues long: MQNLLKNLATSLGREPFVADKQGVYRLTIDKHLVMLAPHGSELVLRTPIDAPMLREGNNVNVTLLRSLMQQALAWAKRYPQTLVLDDCGQLVLEARLRLQELDTHGLQEVINKQLALLEYLIPQLTPFSVASRVGWN.

Interacts with SycN to form a complex which specifically binds to YopN.

It is found in the cytoplasm. Its subcellular location is the cell inner membrane. Functions as a specific chaperone for YopN. It could facilitate the secretion and the subsequent translocation of YopN. This chain is Chaperone protein YscB (yscB), found in Yersinia enterocolitica serotype O:8 / biotype 1B (strain NCTC 13174 / 8081).